Consider the following 242-residue polypeptide: Ribosomal RNA large subunit methyltransferase E (242 aa).

Residues Gly88, Trp90, Asp111, Asp127, and Asp151 each coordinate S-adenosyl-L-methionine. Lys191 serves as the catalytic Proton acceptor.

This sequence belongs to the class I-like SAM-binding methyltransferase superfamily. RNA methyltransferase RlmE family.

The protein resides in the cytoplasm. The catalysed reaction is uridine(2552) in 23S rRNA + S-adenosyl-L-methionine = 2'-O-methyluridine(2552) in 23S rRNA + S-adenosyl-L-homocysteine + H(+). In terms of biological role, specifically methylates the uridine in position 2552 of 23S rRNA at the 2'-O position of the ribose in the fully assembled 50S ribosomal subunit. The polypeptide is Ribosomal RNA large subunit methyltransferase E (Bartonella tribocorum (strain CIP 105476 / IBS 506)).